The sequence spans 455 residues: Beta-cyclopiazonate dehydrogenase (455 aa).

Positions 1-20 are cleaved as a signal peptide; the sequence is MATRIASFIGISTVASLALA.

The protein belongs to the beta-cyclopiazonate dehydrogenase family. FAD serves as cofactor.

The enzyme catalyses beta-cyclopiazonate + A = alpha-cyclopiazonate + AH2. Beta-cyclopiazonate dehydrogenase involved in the synthesis of the fungal neurotoxin alpha-cyclopiazonic acid (CPA). CpaO carries out the dehydrogenation of beta-CPA to yield an unstable enimine product, which is captured by intramolecular cyclization to create the pentacyclic fused scaffold of alpha-cyclopiazonate. In Aspergillus flavus (strain ATCC 200026 / FGSC A1120 / IAM 13836 / NRRL 3357 / JCM 12722 / SRRC 167), this protein is Beta-cyclopiazonate dehydrogenase.